A 158-amino-acid polypeptide reads, in one-letter code: Ribonuclease H (158 aa).

In terms of domain architecture, RNase H type-1 spans 9 to 155; that stretch reads AFKPVELYTD…CDKLAVAAYQ (147 aa). Residues Asp-18, Glu-58, Asp-80, and Asp-147 each contribute to the Mg(2+) site.

The protein belongs to the RNase H family. As to quaternary structure, monomer. It depends on Mg(2+) as a cofactor.

The protein localises to the cytoplasm. It carries out the reaction Endonucleolytic cleavage to 5'-phosphomonoester.. In terms of biological role, endonuclease that specifically degrades the RNA of RNA-DNA hybrids. The chain is Ribonuclease H from Rhodopirellula baltica (strain DSM 10527 / NCIMB 13988 / SH1).